The following is a 276-amino-acid chain: NH(3)-dependent NAD(+) synthetase (276 aa).

Residue glycine 39 to serine 46 coordinates ATP. Aspartate 45 lines the Mg(2+) pocket. Residue arginine 123 coordinates deamido-NAD(+). Threonine 143 serves as a coordination point for ATP. Glutamate 148 is a Mg(2+) binding site. Residues lysine 156 and aspartate 163 each coordinate deamido-NAD(+). Residues lysine 172 and serine 194 each coordinate ATP. Histidine 254–lysine 255 lines the deamido-NAD(+) pocket.

The protein belongs to the NAD synthetase family. Homodimer.

The catalysed reaction is deamido-NAD(+) + NH4(+) + ATP = AMP + diphosphate + NAD(+) + H(+). The protein operates within cofactor biosynthesis; NAD(+) biosynthesis; NAD(+) from deamido-NAD(+) (ammonia route): step 1/1. Functionally, catalyzes the ATP-dependent amidation of deamido-NAD to form NAD. Uses ammonia as a nitrogen source. The protein is NH(3)-dependent NAD(+) synthetase of Hyperthermus butylicus (strain DSM 5456 / JCM 9403 / PLM1-5).